We begin with the raw amino-acid sequence, 515 residues long: Endoglucanase 2 (515 aa).

A signal peptide spans 1 to 31 (MVAKPRSRCCCCSVFIGVIILIAIIIAVIFT). Asn37 carries an N-linked (GlcNAc...) asparagine glycan. The active-site Nucleophile is the Asp100. N-linked (GlcNAc...) asparagine glycosylation is present at Asn250. Residue His433 is part of the active site. N-linked (GlcNAc...) asparagine glycosylation occurs at Asn475. Asp480 is an active-site residue. Asn483 carries an N-linked (GlcNAc...) asparagine glycan. Glu489 is a catalytic residue.

It belongs to the glycosyl hydrolase 9 (cellulase E) family.

It is found in the secreted. It carries out the reaction Endohydrolysis of (1-&gt;4)-beta-D-glucosidic linkages in cellulose, lichenin and cereal beta-D-glucans.. The sequence is that of Endoglucanase 2 from Arabidopsis thaliana (Mouse-ear cress).